Reading from the N-terminus, the 72-residue chain is Translation initiation factor IF-1 (72 aa).

The S1-like domain maps to 1-72; it reads MAKEEAIEIE…SKGRITYRYK (72 aa).

Belongs to the IF-1 family. In terms of assembly, component of the 30S ribosomal translation pre-initiation complex which assembles on the 30S ribosome in the order IF-2 and IF-3, IF-1 and N-formylmethionyl-tRNA(fMet); mRNA recruitment can occur at any time during PIC assembly.

It is found in the cytoplasm. One of the essential components for the initiation of protein synthesis. Stabilizes the binding of IF-2 and IF-3 on the 30S subunit to which N-formylmethionyl-tRNA(fMet) subsequently binds. Helps modulate mRNA selection, yielding the 30S pre-initiation complex (PIC). Upon addition of the 50S ribosomal subunit IF-1, IF-2 and IF-3 are released leaving the mature 70S translation initiation complex. The protein is Translation initiation factor IF-1 of Chlorobium luteolum (strain DSM 273 / BCRC 81028 / 2530) (Pelodictyon luteolum).